A 534-amino-acid polypeptide reads, in one-letter code: uncharacterized protein (534 aa).

2 consecutive transmembrane segments (helical) span residues 149-169 (ILTT…SITI) and 185-205 (VFLV…SLIF).

The protein resides in the cell membrane. This is an uncharacterized protein from Mycoplasma pneumoniae (strain ATCC 29342 / M129 / Subtype 1) (Mycoplasmoides pneumoniae).